Here is a 206-residue protein sequence, read N- to C-terminus: KH domain-containing protein 3 (206 aa).

Residues 1 to 40 (MDTPRRFPTLVQLMQPKAMPVEVLGHLPKRFSWFHSEFLK) form an involved in RNA binding region. Residues 40–103 (KNPKVVRLEV…SYQEDTIKMI (64 aa)) form the KH; atypical domain. The segment covering 144-153 (GTQRSVEVRE) has biased composition (basic and acidic residues). Residues 144–206 (GTQRSVEVRE…EDTRAPVTRL (63 aa)) are disordered. Thr-145 bears the Phosphothreonine mark. The span at 166–183 (TGTQQSLEAANQSGTQRS) shows a compositional bias: polar residues. Ser-171 carries the phosphoserine modification.

It belongs to the KHDC1 family. In terms of assembly, component of the subcortical maternal complex (SCMC), at least composed of NLRP5, KHDC3L, OOEP, and TLE6. Within the complex, interacts with NLRP5, KHDC3L and TLE6. The SCMC may facilitate translocation of its components between the nuclear and cytoplasmic compartments. Forms a scaffold complex with OOEP/FLOPED, and interacts with BLM and TRIM25 at DNA replication forks. Interacts with PARP1; the interaction is increased following the formation of DNA double-strand breaks. Interacts with NUMA1.

The protein localises to the cytoplasm. It localises to the cell cortex. The protein resides in the nucleus. It is found in the mitochondrion. Its subcellular location is the cytoskeleton. The protein localises to the microtubule organizing center. It localises to the centrosome. The protein resides in the chromosome. In terms of biological role, component of the subcortical maternal complex (SCMC), a multiprotein complex that plays a key role in early embryonic development. The SCMC complex is a structural constituent of cytoplasmic lattices, which consist in fibrous structures found in the cytoplasm of oocytes and preimplantation embryos. They are required to store maternal proteins critical for embryonic development, such as proteins that control epigenetic reprogramming of the preimplantation embryo, and prevent their degradation or activation. KHDC3 ensures proper spindle assembly by regulating the localization of AURKA via RHOA signaling and of PLK1 via a RHOA-independent process. Required for the localization of MAD2L1 to kinetochores to enable spindle assembly checkpoint function. As part of the OOEP-KHDC3 scaffold, recruits BLM and TRIM25 to DNA replication forks, thereby promoting the ubiquitination of BLM by TRIM25, enhancing BLM retainment at replication forks and therefore promoting stalled replication fork restart. Regulates homologous recombination-mediated DNA repair via recruitment of RAD51 to sites of DNA double-strand breaks, and sustainment of PARP1 activity, which in turn modulates downstream ATM or ATR activation. Activation of ATM or ATR in response to DNA double-strand breaks may be cell-type specific. Its role in DNA double-strand break repair is independent of its role in restarting stalled replication forks. Promotes neural stem cell neurogenesis and neuronal differentiation in the hippocampus. May regulate normal development of learning, memory and anxiety. Capable of binding RNA. This chain is KH domain-containing protein 3 (KHDC3L), found in Macaca mulatta (Rhesus macaque).